Here is a 384-residue protein sequence, read N- to C-terminus: Probable splicing factor YJU2B (384 aa).

The tract at residues 1–28 is disordered; the sequence is MGERKGTNKYYPPDFDPAKHGSLNGYRN. The stretch at 183–212 forms a coiled coil; that stretch reads NSLLRSKFREEKKQIKEEEERDQALLTKAS. The tract at residues 275–331 is disordered; it reads GIRTKTPSVPGISPVSLGVVRRTSKEENKAEDKSVESPDGSRSRKAEGMCRKEETGC. Over residues 297-331 the composition is skewed to basic and acidic residues; it reads TSKEENKAEDKSVESPDGSRSRKAEGMCRKEETGC.

This sequence belongs to the CWC16 family.

It localises to the nucleus. Its function is as follows. May be involved in mRNA splicing. This chain is Probable splicing factor YJU2B (yju2b), found in Xenopus laevis (African clawed frog).